We begin with the raw amino-acid sequence, 2273 residues long: Acetyl-CoA carboxylase, mitochondrial (2273 aa).

Residues 1–104 constitute a mitochondrion transit peptide; it reads KGKTITHGQS…RGNIHKHTRL (104 aa). One can recognise a Biotin carboxylation domain in the interval 134–635; the sequence is VISKILIANN…STGWLDDLIL (502 aa). The region spanning 292 to 484 is the ATP-grasp domain; the sequence is KTNFVSVPDD…LPATQLQIAM (193 aa). 332-337 lines the ATP pocket; that stretch reads GGGGKG. The active site involves Arg459. The Biotinyl-binding domain occupies 763-837; that stretch reads LEAELNPTQV…EAGDVIAKLT (75 aa). Lys804 bears the N6-biotinyllysine mark. In terms of domain architecture, CoA carboxyltransferase N-terminal spans 1532-1867; sequence PYSVKDWLQP…KRDMSPPLLE (336 aa). The tract at residues 1532 to 2187 is carboxyltransferase; that stretch reads PYSVKDWLQP…EGQVIKRLQK (656 aa). CoA-binding residues include Arg1776, Lys2080, and Arg2082. The 317-residue stretch at 1871-2187 folds into the CoA carboxyltransferase C-terminal domain; sequence RWDRDVDFKP…EGQVIKRLQK (317 aa).

The cofactor is biotin.

Its subcellular location is the mitochondrion. It catalyses the reaction hydrogencarbonate + acetyl-CoA + ATP = malonyl-CoA + ADP + phosphate + H(+). It carries out the reaction N(6)-biotinyl-L-lysyl-[protein] + hydrogencarbonate + ATP = N(6)-carboxybiotinyl-L-lysyl-[protein] + ADP + phosphate + H(+). The protein operates within lipid metabolism; malonyl-CoA biosynthesis; malonyl-CoA from acetyl-CoA: step 1/1. Catalyzes the rate-limiting reaction in the mitochondrial fatty acid synthesis (FAS) type II pathway. Responsible for the production of the mitochondrial malonyl-CoA, used for the biosynthesis of the cofactor lipoic acid. This protein carries three functions: biotin carboxyl carrier protein, biotin carboxylase, and carboxyltransferase. This Saccharomyces cerevisiae (strain ATCC 204508 / S288c) (Baker's yeast) protein is Acetyl-CoA carboxylase, mitochondrial (HFA1).